Consider the following 359-residue polypeptide: Bergaptol O-methyltransferase (359 aa).

H126 provides a ligand contact to bergaptol. S-adenosyl-L-homocysteine contacts are provided by S179, G203, D226, D246, and K260. H264 is a binding site for bergaptol. H264 serves as the catalytic Proton acceptor.

The protein belongs to the class I-like SAM-binding methyltransferase superfamily. Cation-independent O-methyltransferase family. COMT subfamily.

The enzyme catalyses a 5-hydroxyfurocoumarin + S-adenosyl-L-methionine = a 5-methoxyfurocoumarin + S-adenosyl-L-homocysteine + H(+). The catalysed reaction is bergaptol + S-adenosyl-L-methionine = bergapten + S-adenosyl-L-homocysteine. With respect to regulation, inhibited by Cu(2+), Ni(2+) and Co(2+). This Glehnia littoralis (Beach silvertop) protein is Bergaptol O-methyltransferase.